The primary structure comprises 200 residues: Recombination protein RecR (200 aa).

The C4-type zinc-finger motif lies at C57–C72. The Toprim domain occupies G81–P176.

Belongs to the RecR family.

In terms of biological role, may play a role in DNA repair. It seems to be involved in an RecBC-independent recombinational process of DNA repair. It may act with RecF and RecO. In Haemophilus influenzae (strain 86-028NP), this protein is Recombination protein RecR.